Reading from the N-terminus, the 83-residue chain is MASQQEKKQLDERAKKGETVVPGGTGGKSFEAQQHLAEGRSRGGNTRKEQLGSEGYQQMGRKGGSTPDKTDKEDAEDEPSTRT.

Composition is skewed to basic and acidic residues over residues 1–18 (MASQ…KKGE) and 37–51 (AEGR…KEQL). Residues 1–83 (MASQQEKKQL…DAEDEPSTRT (83 aa)) are disordered. Residues 73-83 (EDAEDEPSTRT) show a composition bias toward acidic residues.

The protein belongs to the small hydrophilic plant seed protein family.

Its subcellular location is the cytoplasm. Functionally, this protein may play a role in equipping the seed for survival, maintaining a minimal level of hydration in the dry organism and preventing the denaturation of cytoplasmic components, or may play a role during imbibition by controlling water uptake. The sequence is that of Late seed maturation protein P8B6 from Raphanus sativus (Radish).